The primary structure comprises 506 residues: Phenylacetaldehyde synthase (506 aa).

P101, H202, and H317 together coordinate L-phenylalanine. An N6-(pyridoxal phosphate)lysine modification is found at K318.

It belongs to the group II decarboxylase family. Homotetramer. Pyridoxal 5'-phosphate is required as a cofactor. As to expression, highly expressed in corolla limbs and at lower levels in corolla tubes and ovaries.

The enzyme catalyses L-phenylalanine + O2 + H2O + H(+) = 2-phenylacetaldehyde + H2O2 + NH4(+) + CO2. Its function is as follows. Bifunctional enzyme that catalyzes the decarboxylation of L-phenylalanine to 2-phenylethylamine, which is then oxidized to form 2-phenylacetaldehyde, a constituent of floral scent. 2-phenylacetaldehyde is a precursor of 2-phenylethanol, another constituent of floral scent. In Petunia hybrida (Petunia), this protein is Phenylacetaldehyde synthase.